Reading from the N-terminus, the 276-residue chain is F-box/LRR-repeat protein 20 (276 aa).

Residues 22–68 (AVINKKLPKELLLRIFSFLDVVTLCRCAQVSRAWNVLALDGSNWQRI) enclose the F-box domain. LRR repeat units follow at residues 74–100 (QRDIEGRVVENISKRCGGFLRKLSLRG), 101–126 (CLGVGDNALRTFAQNCRNIEVLSLNG), 127–152 (CTKTTDATCTSLSKFCSKLRHLDLAS), 153–178 (CTSITNMSLKALSEGCPLLEQLNISW), 179–204 (CDQVTKDGIQALVRGCGGLKALFLKG), 205–230 (CTQLEDEALKYIGAHCPELVTLNLQT), 231–256 (CLQITDEGLITICRGCHKLQSLCASG), and 257–276 (CSNITDAILNALGQNCPRLR).

As to quaternary structure, interacts with SKP1 and CUL1. Widely expressed, with highest expression in skeletal muscle, heart and brain.

Its subcellular location is the cytoplasm. Its function is as follows. Substrate-recognition component of the SCF (SKP1-CUL1-F-box protein)-type E3 ubiquitin ligase complex. Role in neural transmission. The chain is F-box/LRR-repeat protein 20 (Fbxl20) from Rattus norvegicus (Rat).